The sequence spans 481 residues: MRWLWPLAVSLAVVLAVGPSEVSGAATLSLGGHRAKVQEQQSRPRRGTKDEGPKEVQHYVPEEWAEYPKPIHPAGLQPTKPLVATSPNPDKDGATSESGQELRTNLTGTPSQRLQIQNPLYPVTESSYSAYAVMLLALVVFAVGIVGNLSVMCIVWHSYYLKSAWNSILASLALWDFLVLFFCLPIVIFNEITKQRLLGDVSCRAVPFMEVSSLGVTTFSLCALGIDRFHVATSTLPKVRPIERCQSILAKLAVIWVGSMMLAVPELLLWQLAQEPTPTMGTVDSCIMKPSADLPESLYSLVMTYQNARMWWYFGCYFCLPILFTVTCQLVTWRVRGPPGRKPECRAGRHEQCESQLNSTVVGLTVVYAFCTLPENICNIVVAYLSTELTRQTLDLLGLINQFSTFFKGAITPVLLLCICRPLGQAFLDCCCCCCCEECGGASDSSATVSADSKLKAEVSSSIYFHKPRESPPLLPLGTPC.

Residues 1-24 (MRWLWPLAVSLAVVLAVGPSEVSG) form the signal peptide. The Extracellular segment spans residues 25–134 (AATLSLGGHR…ESSYSAYAVM (110 aa)). Disordered stretches follow at residues 30-55 (LGGHRAKVQEQQSRPRRGTKDEGPKE) and 76-107 (LQPTKPLVATSPNPDKDGATSESGQELRTNLT). A compositionally biased stretch (polar residues) spans 95 to 107 (TSESGQELRTNLT). Asn-105 carries an N-linked (GlcNAc...) asparagine glycan. The helical transmembrane segment at 135–155 (LLALVVFAVGIVGNLSVMCIV) threads the bilayer. Over 156–167 (WHSYYLKSAWNS) the chain is Cytoplasmic. Residues 168–188 (ILASLALWDFLVLFFCLPIVI) form a helical membrane-spanning segment. Residues 189–205 (FNEITKQRLLGDVSCRA) lie on the Extracellular side of the membrane. The cysteines at positions 203 and 286 are disulfide-linked. A helical membrane pass occupies residues 206–226 (VPFMEVSSLGVTTFSLCALGI). At 227-251 (DRFHVATSTLPKVRPIERCQSILAK) the chain is on the cytoplasmic side. Residues 252–272 (LAVIWVGSMMLAVPELLLWQL) traverse the membrane as a helical segment. At 273-310 (AQEPTPTMGTVDSCIMKPSADLPESLYSLVMTYQNARM) the chain is on the extracellular side. Residues 311 to 331 (WWYFGCYFCLPILFTVTCQLV) traverse the membrane as a helical segment. Topologically, residues 332–360 (TWRVRGPPGRKPECRAGRHEQCESQLNST) are cytoplasmic. Residues 361 to 381 (VVGLTVVYAFCTLPENICNIV) form a helical membrane-spanning segment. Over 382 to 398 (VAYLSTELTRQTLDLLG) the chain is Extracellular. A helical membrane pass occupies residues 399–419 (LINQFSTFFKGAITPVLLLCI). The Cytoplasmic segment spans residues 420-481 (CRPLGQAFLD…PPLLPLGTPC (62 aa)). Ser-471 carries the phosphoserine modification. Thr-479 carries the post-translational modification Phosphothreonine.

This sequence belongs to the G-protein coupled receptor 1 family. In terms of assembly, interacts with the PTCH1 receptor. Undergoes metalloprotease-mediated cleavage which reduces its constitutive activity. In terms of processing, ubiquitinated. Highly expressed in brain.

The protein localises to the cell membrane. The protein resides in the cell projection. It localises to the cilium membrane. In terms of biological role, G-protein coupled receptor. Has been shown to bind the neuroprotective and glioprotective factor prosaposin (PSAP), leading to endocytosis followed by an ERK phosphorylation cascade. However, other studies have shown that prosaposin does not increase activity. It has been suggested that GPR37L1 is a constitutively active receptor which signals through the guanine nucleotide-binding protein G(s) subunit alpha. Participates in the regulation of postnatal cerebellar development by modulating the Shh pathway. Regulates baseline blood pressure in females and protects against cardiovascular stress in males. Mediates inhibition of astrocyte glutamate transporters and reduction in neuronal N-methyl-D-aspartate receptor activity. The polypeptide is G-protein coupled receptor 37-like 1 (Gpr37l1) (Rattus norvegicus (Rat)).